A 170-amino-acid polypeptide reads, in one-letter code: MMGDNEGRRTPLLNLGVQVSMRVLTIGAAMASMWVMITNREVASVYGIAFEAKYSYSSAFRYLVYAQIAVCAATLFTLVWACLAVRRRGLVFALFFFDLLTTLTAISAFSAAFAEGYVGKYGNKQAGWLPICGYVHGYCSRVTISLAMSFASFILLFILTVLTASAARHY.

Topologically, residues Met1–Gly16 are cytoplasmic. A helical membrane pass occupies residues Val17–Ile37. Over Thr38–Tyr62 the chain is Extracellular. Residues Leu63 to Leu83 form a helical membrane-spanning segment. Topologically, residues Ala84–Arg88 are cytoplasmic. The helical transmembrane segment at Gly89–Phe109 threads the bilayer. The Extracellular segment spans residues Ser110–Arg141. Residues Val142–Leu162 form a helical membrane-spanning segment. Over Thr163–Tyr170 the chain is Cytoplasmic.

The protein belongs to the Casparian strip membrane proteins (CASP) family. As to quaternary structure, homodimer and heterodimers. As to expression, in flowers, expressed in the anther wall.

The protein localises to the cell membrane. The sequence is that of CASP-like protein 1F1 from Arabidopsis thaliana (Mouse-ear cress).